Consider the following 357-residue polypeptide: MCPLMAENHEVIEEGNSSELPLSAEDAKKLTELAENVLQGWDVQAEKIDVIQGNQMALVWKVHTDSGAVCLKRIHRPEKKALFSIFAQDYLAKKGMNVPGILPNKKGSLYSKHGSFLFVVYDWIEGRPFELTVKQDLEFIMKGLADFHTASVGYQPPNGVPIFTKLGRWPNHYTKRCKQMETWKLMAEAEKEDPFSQLYLQEIDGFIEDGLRIKDRLLQSTYVPWTEQLKKSPNLCHQDYGTGNTLLGENEQIWVIDLDTVSFDLPIRDLRKMIIPLLDTTGVWDDETFNVMLNAYESRAPLTEEQKQVMFIDMLFPYELYDVIREKYVRKSALPKEELESAFEYERIKANALRQLI.

This sequence belongs to the CotS family.

It localises to the spore coat. In Bacillus subtilis (strain 168), this protein is Spore coat protein I (cotI).